A 434-amino-acid polypeptide reads, in one-letter code: Xylose isomerase (434 aa).

Catalysis depends on residues His-99 and Asp-102. Residues Glu-230, Glu-266, His-269, Asp-294, Asp-305, Asp-307, and Asp-337 each coordinate Mg(2+).

It belongs to the xylose isomerase family. In terms of assembly, homotetramer. Mg(2+) serves as cofactor.

It localises to the cytoplasm. The catalysed reaction is alpha-D-xylose = alpha-D-xylulofuranose. In Dinoroseobacter shibae (strain DSM 16493 / NCIMB 14021 / DFL 12), this protein is Xylose isomerase.